Here is a 296-residue protein sequence, read N- to C-terminus: Ribosomal protein L11 methyltransferase (296 aa).

Residues Thr145, Gly166, Asp188, and Asn230 each contribute to the S-adenosyl-L-methionine site.

The protein belongs to the methyltransferase superfamily. PrmA family.

It localises to the cytoplasm. The enzyme catalyses L-lysyl-[protein] + 3 S-adenosyl-L-methionine = N(6),N(6),N(6)-trimethyl-L-lysyl-[protein] + 3 S-adenosyl-L-homocysteine + 3 H(+). Methylates ribosomal protein L11. This Histophilus somni (strain 129Pt) (Haemophilus somnus) protein is Ribosomal protein L11 methyltransferase.